A 343-amino-acid polypeptide reads, in one-letter code: L-threonine 3-dehydrogenase (343 aa).

Zn(2+) is bound at residue cysteine 40. Residues threonine 42 and histidine 45 each act as charge relay system in the active site. Positions 65, 66, 95, 98, 101, and 109 each coordinate Zn(2+). Residues isoleucine 177, aspartate 197, arginine 202, 264 to 266, and 288 to 289 contribute to the NAD(+) site; these read LGI and IY.

The protein belongs to the zinc-containing alcohol dehydrogenase family. As to quaternary structure, homotetramer. It depends on Zn(2+) as a cofactor.

It is found in the cytoplasm. It catalyses the reaction L-threonine + NAD(+) = (2S)-2-amino-3-oxobutanoate + NADH + H(+). Its pathway is amino-acid degradation; L-threonine degradation via oxydo-reductase pathway; glycine from L-threonine: step 1/2. In terms of biological role, catalyzes the NAD(+)-dependent oxidation of L-threonine to 2-amino-3-ketobutyrate. This is L-threonine 3-dehydrogenase from Vibrio atlanticus (strain LGP32) (Vibrio splendidus (strain Mel32)).